The chain runs to 334 residues: Non-functional pseudokinase ZED1 (334 aa).

Residues 49–334 (FSESRIISSW…KELKLIEKLS (286 aa)) enclose the Protein kinase domain. ATP-binding positions include 55 to 63 (ISSWGYFIW) and lysine 76. An O-acetylthreonine mark is found at threonine 125 and threonine 177.

This sequence belongs to the protein kinase superfamily. Ser/Thr protein kinase family. ZRK subfamily. As to quaternary structure, interacts with RPP13L4/ZAR1. Component of an immune signaling complex made of, at least, SZE1, BKN2/SZE2, ZAR1 and ZED1. Binds directly to SZE1 at the plasma membrane. Expressed in seedlings, young leaves, floral organs, shoot apical meristems (SAM) and inflorescence stems.

The protein localises to the cytoplasm. It is found in the cytosol. It localises to the nucleus. Its subcellular location is the cell membrane. Together with RPP13L4/ZAR1, involved in the ambient temperature (above 22 degrees Celsius)-sensitive aerial organ development. Together with RPP13L4/ZAR1, involved in the regulation of the ambient temperature-sensitive intersection of growth and immune response in the absence of pathogens, by repressing the transcription of SNC1. Probable non-functional kinase required for recognition of the Pseudomonas syringae type III effector HopZ1a by RPP13L4/ZAR1 and, together with SZE1 and SZE2, to trigger subsequent defense responses. May function as a decoy to trap HopZ1a in the ZAR1 complex for recognition by the plant immune system. This Arabidopsis thaliana (Mouse-ear cress) protein is Non-functional pseudokinase ZED1.